We begin with the raw amino-acid sequence, 690 residues long: Elongation factor G (690 aa).

Positions 8-283 constitute a tr-type G domain; that stretch reads SKCRNIGIMA…AVVDYLPSPN (276 aa). Residues 17–24, 81–85, and 135–138 contribute to the GTP site; these read AHIDAGKT, DTPGH, and NKMD.

The protein belongs to the TRAFAC class translation factor GTPase superfamily. Classic translation factor GTPase family. EF-G/EF-2 subfamily.

The protein localises to the cytoplasm. Functionally, catalyzes the GTP-dependent ribosomal translocation step during translation elongation. During this step, the ribosome changes from the pre-translocational (PRE) to the post-translocational (POST) state as the newly formed A-site-bound peptidyl-tRNA and P-site-bound deacylated tRNA move to the P and E sites, respectively. Catalyzes the coordinated movement of the two tRNA molecules, the mRNA and conformational changes in the ribosome. This is Elongation factor G from Anaplasma phagocytophilum (strain HZ).